Consider the following 805-residue polypeptide: Angiotensin-converting enzyme 2 (805 aa).

Residues 1-17 form the signal peptide; that stretch reads MSGSFWLLLSFAALTAA. At 18–740 the chain is on the extracellular side; the sequence is QSTTEELAKT…LSPPYRPPVT (723 aa). The Peptidase M2 domain occupies 19–607; sequence STTEELAKTF…QNRNSFVGWD (589 aa). The segment at 30–41 is interaction with SARS S protein; it reads ETFNYEAQELSY. A glycan (N-linked (GlcNAc...) asparagine) is linked at asparagine 53. 2 interaction with SARS S protein regions span residues 82–84 and 90–93; these read TYP and DAKI. Residues cysteine 133 and cysteine 141 are joined by a disulfide bond. Chloride is bound at residue arginine 169. N-linked (GlcNAc...) asparagine glycosylation is present at asparagine 216. Position 273 (arginine 273) interacts with substrate. An N-linked (GlcNAc...) asparagine glycan is attached at asparagine 322. A disulfide bridge connects residues cysteine 344 and cysteine 361. Residue 345–346 participates in substrate binding; the sequence is HP. An interaction with SARS S protein region spans residues 353–357; the sequence is KGDFR. Histidine 374 contacts Zn(2+). Glutamate 375 acts as the Proton acceptor in catalysis. Positions 378 and 402 each coordinate Zn(2+). Tryptophan 477 and lysine 481 together coordinate chloride. Histidine 505 (proton donor) is an active-site residue. Position 515 (tyrosine 515) interacts with substrate. Residues cysteine 530 and cysteine 542 are joined by a disulfide bond. N-linked (GlcNAc...) asparagine glycosylation is present at asparagine 546. In terms of domain architecture, Collectrin-like spans 614 to 805; the sequence is SDQSIKVRIS…QHADDVQTSF (192 aa). Residues 652 to 659 are essential for cleavage by ADAM17; sequence REYFSKVK. 2 N-linked (GlcNAc...) asparagine glycosylation sites follow: asparagine 660 and asparagine 690. Residues 697 to 716 form an essential for cleavage by TMPRSS11D and TMPRSS2 region; it reads RSEVEDAIRMSRSRINDAFR. Residues 741 to 761 traverse the membrane as a helical segment; that stretch reads IWLIVFGVVMGAIVVGIVLLI. Residues 762 to 805 lie on the Cytoplasmic side of the membrane; that stretch reads VSGIRNRRKNDQAGSEENPYASVDLNKGENNPGFQHADDVQTSF. Residues 771–805 are disordered; the sequence is NDQAGSEENPYASVDLNKGENNPGFQHADDVQTSF. Residues 778-786 carry the LIR motif; that stretch reads ENPYASVDL. Phosphotyrosine is present on tyrosine 781. The Endocytic sorting signal signature appears at 781–784; the sequence is YASV. An SH2-binding motif is present at residues 781 to 785; that stretch reads YASVD. The residue at position 783 (serine 783) is a Phosphoserine. The PTB signature appears at 792 to 795; sequence NPGF. The PDZ-binding signature appears at 803–805; that stretch reads TSF.

This sequence belongs to the peptidase M2 family. As to quaternary structure, homodimer. Interacts with the catalytically active form of TMPRSS2. Interacts with SLC6A19; this interaction is essential for expression and function of SLC6A19 in intestine. Interacts with ITGA5:ITGB1. Probably interacts (via endocytic sorting signal motif) with AP2M1; the interaction is inhibited by phosphorylation of Tyr-781. Interacts (via PDZ-binding motif) with NHERF1 (via PDZ domains); the interaction may enhance ACE2 membrane residence. (Microbial infection) Interacts with SARS-CoV S protein. It depends on Zn(2+) as a cofactor. Requires chloride as cofactor. Post-translationally, proteolytic cleavage by ADAM17 generates a secreted form. Also cleaved by serine proteases: TMPRSS2, TMPRSS11D and HPN/TMPRSS1. Phosphorylated. Phosphorylation at Tyr-781 probably inhibits interaction with AP2M1 and enables interactions with proteins containing SH2 domains.

The protein resides in the secreted. It localises to the cell membrane. Its subcellular location is the cytoplasm. It is found in the cell projection. The protein localises to the cilium. The protein resides in the apical cell membrane. It carries out the reaction angiotensin II + H2O = angiotensin-(1-7) + L-phenylalanine. The catalysed reaction is angiotensin I + H2O = angiotensin-(1-9) + L-leucine. In terms of biological role, essential counter-regulatory carboxypeptidase of the renin-angiotensin hormone system that is a critical regulator of blood volume, systemic vascular resistance, and thus cardiovascular homeostasis. Converts angiotensin I to angiotensin 1-9, a nine-amino acid peptide with anti-hypertrophic effects in cardiomyocytes, and angiotensin II to angiotensin 1-7, which then acts as a beneficial vasodilator and anti-proliferation agent, counterbalancing the actions of the vasoconstrictor angiotensin II. Also removes the C-terminal residue from three other vasoactive peptides, neurotensin, kinetensin, and des-Arg bradykinin, but is not active on bradykinin. Also cleaves other biological peptides, such as apelins, casomorphins and dynorphin A. Plays an important role in amino acid transport by acting as binding partner of amino acid transporter SLC6A19 in intestine, regulating trafficking, expression on the cell surface, and its catalytic activity. Functionally, (Microbial infection) Acts as a receptor for human coronavirus SARS. In Paguma larvata (Masked palm civet), this protein is Angiotensin-converting enzyme 2 (ACE2).